Reading from the N-terminus, the 240-residue chain is 3-deoxy-D-manno-octulosonic acid kinase (240 aa).

Residue aspartate 170 is part of the active site.

This sequence belongs to the protein kinase superfamily. KdkA/RfaP family.

It is found in the cell inner membrane. It catalyses the reaction an alpha-Kdo-(2-&gt;6)-lipid IVA + ATP = a 4-O-phospho-alpha-Kdo-(2-&gt;6)-lipid IVA + ADP + H(+). It functions in the pathway bacterial outer membrane biogenesis; LPS core biosynthesis. Functionally, catalyzes the ATP-dependent phosphorylation of the 3-deoxy-D-manno-octulosonic acid (Kdo) residue in Kdo-lipid IV(A) at the 4-OH position. The sequence is that of 3-deoxy-D-manno-octulosonic acid kinase from Actinobacillus succinogenes (strain ATCC 55618 / DSM 22257 / CCUG 43843 / 130Z).